We begin with the raw amino-acid sequence, 302 residues long: Nuclear egress protein 1 (302 aa).

Over residues 1-17 (MPKSVSSHISLATSTGR) the composition is skewed to polar residues. The segment at 1–22 (MPKSVSSHISLATSTGRSGPRD) is disordered. A CCCH-type zinc finger spans residues 102-227 (CVSLSPFGHS…CILFKTRALH (126 aa)).

It belongs to the herpesviridae NEC1 protein family. In terms of assembly, forms a heterohexameric complex with NEC2. Interacts with capsid vertex specific component 2/CVC2; this interaction directs the capsid to the host inner nuclear membrane to initiate budding. In terms of processing, phosphorylated at serine residues in the N-terminus. This phosphorylation regulates the localization within the inner nuclear membrane.

The protein localises to the host nucleus inner membrane. Its function is as follows. Plays an essential role in virion nuclear egress, the first step of virion release from infected cell. Within the host nucleus, NEC1 interacts with the newly formed capsid through the vertexes and directs it to the inner nuclear membrane by associating with NEC2. Induces the budding of the capsid at the inner nuclear membrane as well as its envelopment into the perinuclear space. There, the NEC1/NEC2 complex promotes the fusion of the enveloped capsid with the outer nuclear membrane and the subsequent release of the viral capsid into the cytoplasm where it will reach the secondary budding sites in the host Golgi or trans-Golgi network. The chain is Nuclear egress protein 1 from Homo sapiens (Human).